Reading from the N-terminus, the 794-residue chain is K(+)-insensitive pyrophosphate-energized proton pump (794 aa).

5 helical membrane passes run 20–40, 74–94, 102–122, 163–183, and 194–214; these read ALVAVIAVVALAALVLAGVLV, TLGVFAVVVFFLLMLLPADDW, IFFLIGAAFSAATGYIGMWLA, GVVGMFTVGLGLLGACCVVLV, and GFGLGAALIAMFMRVGGGIFT. K215 contributes to the substrate binding site. Residues D218, D222, N245, and D248 each contribute to the Mg(2+) site. 6 helical membrane passes run 264–284, 285–305, 321–341, 365–385, 422–442, and 446–466; these read YAVTLVAALILGKVAFGDFGL, AFPLLVPAIGVLTAMIGIFAV, GFFISAVISLVLVAVAVFVYL, ILALVAVAIGIVLAALIQQLT, AVYTALLIGLGVYGAFLLGGT, and LALFAVALAGTGLLTTVGVIV. Residue D476 participates in Mg(2+) binding. The next 3 helical transmembrane spans lie at 508–528, 564–584, and 641–661; these read AITKGIAIATAVLAAAALFGS, VGLIAGAAVVFLFSGLAINAV, and IFIGFTLGVGALGAFLAGAIG. Ca(2+) contacts are provided by D678, D704, and D708. K711 contacts substrate. 2 helical membrane passes run 717–737 and 747–767; these read AINPLLKVMNLVALLIAPAVI and VVVRVLIAVVAFAVIAAAVYV.

This sequence belongs to the H(+)-translocating pyrophosphatase (TC 3.A.10) family. K(+)-insensitive subfamily. As to quaternary structure, homodimer. The cofactor is Mg(2+).

It localises to the cell membrane. The enzyme catalyses diphosphate + H2O + H(+)(in) = 2 phosphate + 2 H(+)(out). Its function is as follows. Proton pump that utilizes the energy of pyrophosphate hydrolysis as the driving force for proton movement across the membrane. Generates a proton motive force. The polypeptide is K(+)-insensitive pyrophosphate-energized proton pump (Streptomyces coelicolor (strain ATCC BAA-471 / A3(2) / M145)).